A 165-amino-acid polypeptide reads, in one-letter code: Crossover junction endodeoxyribonuclease RuvC (165 aa).

Catalysis depends on residues D7, E68, and H142. Mg(2+) is bound by residues D7, E68, and H142.

This sequence belongs to the RuvC family. As to quaternary structure, homodimer which binds Holliday junction (HJ) DNA. The HJ becomes 2-fold symmetrical on binding to RuvC with unstacked arms; it has a different conformation from HJ DNA in complex with RuvA. In the full resolvosome a probable DNA-RuvA(4)-RuvB(12)-RuvC(2) complex forms which resolves the HJ. It depends on Mg(2+) as a cofactor.

The protein localises to the cytoplasm. The catalysed reaction is Endonucleolytic cleavage at a junction such as a reciprocal single-stranded crossover between two homologous DNA duplexes (Holliday junction).. In terms of biological role, the RuvA-RuvB-RuvC complex processes Holliday junction (HJ) DNA during genetic recombination and DNA repair. Endonuclease that resolves HJ intermediates. Cleaves cruciform DNA by making single-stranded nicks across the HJ at symmetrical positions within the homologous arms, yielding a 5'-phosphate and a 3'-hydroxyl group; requires a central core of homology in the junction. The consensus cleavage sequence is 5'-(A/T)TT(C/G)-3'. Cleavage occurs on the 3'-side of the TT dinucleotide at the point of strand exchange. HJ branch migration catalyzed by RuvA-RuvB allows RuvC to scan DNA until it finds its consensus sequence, where it cleaves and resolves the cruciform DNA. The sequence is that of Crossover junction endodeoxyribonuclease RuvC from Anaplasma marginale (strain Florida).